Consider the following 1056-residue polypeptide: 120.7 kDa protein in NOF-FB transposable element (1056 aa).

The disordered stretch occupies residues 716–749; the sequence is KTIKPTEGNDAEDNDTDDENKEMDLSEQPKEKPR. The span at 724–736 shows a compositional bias: acidic residues; that stretch reads NDAEDNDTDDENK. Basic and acidic residues predominate over residues 737–749; the sequence is EMDLSEQPKEKPR.

It localises to the nucleus. May be involved in the transposition of NOF-FB and other FB elements. This Drosophila melanogaster (Fruit fly) protein is 120.7 kDa protein in NOF-FB transposable element (NOF).